The following is a 1415-amino-acid chain: DNA-directed RNA polymerase subunit beta' (1415 aa).

4 residues coordinate Zn(2+): Cys-69, Cys-71, Cys-84, and Cys-87. Residues Asp-461, Asp-463, and Asp-465 each contribute to the Mg(2+) site. Residues Cys-805, Cys-879, Cys-886, and Cys-889 each contribute to the Zn(2+) site.

The protein belongs to the RNA polymerase beta' chain family. As to quaternary structure, the RNAP catalytic core consists of 2 alpha, 1 beta, 1 beta' and 1 omega subunit. When a sigma factor is associated with the core the holoenzyme is formed, which can initiate transcription. It depends on Mg(2+) as a cofactor. Zn(2+) is required as a cofactor.

The catalysed reaction is RNA(n) + a ribonucleoside 5'-triphosphate = RNA(n+1) + diphosphate. Its function is as follows. DNA-dependent RNA polymerase catalyzes the transcription of DNA into RNA using the four ribonucleoside triphosphates as substrates. This chain is DNA-directed RNA polymerase subunit beta', found in Anaplasma marginale (strain Florida).